The chain runs to 480 residues: Protein nucleotidyltransferase YdiU (480 aa).

ATP-binding residues include glycine 86, glycine 88, arginine 89, lysine 109, aspartate 121, glycine 122, arginine 172, and arginine 179. Aspartate 248 serves as the catalytic Proton acceptor. Mg(2+) is bound by residues asparagine 249 and aspartate 258. Aspartate 258 is an ATP binding site.

This sequence belongs to the SELO family. Mg(2+) serves as cofactor. The cofactor is Mn(2+).

The catalysed reaction is L-seryl-[protein] + ATP = 3-O-(5'-adenylyl)-L-seryl-[protein] + diphosphate. It carries out the reaction L-threonyl-[protein] + ATP = 3-O-(5'-adenylyl)-L-threonyl-[protein] + diphosphate. It catalyses the reaction L-tyrosyl-[protein] + ATP = O-(5'-adenylyl)-L-tyrosyl-[protein] + diphosphate. The enzyme catalyses L-histidyl-[protein] + UTP = N(tele)-(5'-uridylyl)-L-histidyl-[protein] + diphosphate. The catalysed reaction is L-seryl-[protein] + UTP = O-(5'-uridylyl)-L-seryl-[protein] + diphosphate. It carries out the reaction L-tyrosyl-[protein] + UTP = O-(5'-uridylyl)-L-tyrosyl-[protein] + diphosphate. In terms of biological role, nucleotidyltransferase involved in the post-translational modification of proteins. It can catalyze the addition of adenosine monophosphate (AMP) or uridine monophosphate (UMP) to a protein, resulting in modifications known as AMPylation and UMPylation. The protein is Protein nucleotidyltransferase YdiU of Klebsiella pneumoniae (strain 342).